Here is a 798-residue protein sequence, read N- to C-terminus: Transferrin receptor protein 2 (798 aa).

Over 1–81 (MEQRWGLLRK…WAAAGRKAAP (81 aa)) the chain is Cytoplasmic. An Endocytosis signal motif is present at residues 23-26 (YRRV). Residues 25-44 (RVEGPQLENLEEEDREEGEE) are disordered. Positions 33–44 (NLEEEDREEGEE) are enriched in acidic residues. The chain crosses the membrane as a helical; Signal-anchor for type II membrane protein span at residues 82 to 102 (YLVLTTLLIFTGAFLLGYVAF). Residues 103-798 (RGSCQACGDS…GDVWNIDNNF (696 aa)) lie on the Extracellular side of the membrane. Residues N235, N334, and N535 are each glycosylated (N-linked (GlcNAc...) asparagine).

This sequence belongs to the peptidase M28 family. M28B subfamily. As to quaternary structure, homodimer.

It is found in the cell membrane. Mediates cellular uptake of transferrin-bound iron in a non-iron dependent manner. May be involved in iron metabolism, hepatocyte function and erythrocyte differentiation. This Rattus norvegicus (Rat) protein is Transferrin receptor protein 2 (Tfr2).